A 121-amino-acid chain; its full sequence is Basic phospholipase A2 homolog (121 aa).

Intrachain disulfides connect Cys-26/Cys-115, Cys-28/Cys-44, Cys-43/Cys-95, Cys-49/Cys-121, Cys-50/Cys-88, Cys-57/Cys-81, and Cys-75/Cys-86.

This sequence belongs to the phospholipase A2 family. Group II subfamily. K49 sub-subfamily. As to quaternary structure, homodimer. Expressed by the venom gland.

It localises to the secreted. In terms of biological role, snake venom phospholipase A2 homolog that lacks enzymatic activity, but has myotoxic and cytolytic activities. The polypeptide is Basic phospholipase A2 homolog (Metlapilcoatlus nummifer (Mexican jumping pitviper)).